A 289-amino-acid polypeptide reads, in one-letter code: Bidirectional sugar transporter SWEET10 (289 aa).

The Extracellular segment spans residues 1–5 (MAISQ). A helical transmembrane segment spans residues 6–26 (AVLATVFGILGNIISFFVCLA). The 86-residue stretch at 11-96 (VFGILGNIIS…SLFFFYAPKK (86 aa)) folds into the MtN3/slv 1 domain. Residues 27 to 43 (PIPTFVRIYKRKSSEGY) are Cytoplasmic-facing. A helical membrane pass occupies residues 44 to 64 (QSIPYVISLFSAMLWMYYAMI). Residues 65-70 (KKDAMM) are Extracellular-facing. A helical membrane pass occupies residues 71 to 91 (LITINSFAFVVQIVYISLFFF). At 92–103 (YAPKKEKTLTVK) the chain is on the cytoplasmic side. The helical transmembrane segment at 104-124 (FVLFVDVLGFGAIFVLTYFII) threads the bilayer. The Extracellular segment spans residues 125–131 (HANKRVQ). The MtN3/slv 2 domain maps to 131–214 (QVLGYICMVF…QMILFLIYKK (84 aa)). Residues 132 to 152 (VLGYICMVFALSVFVAPLGII) traverse the membrane as a helical segment. The Cytoplasmic portion of the chain corresponds to 153–165 (RKVIKTKSAEFMP). The helical transmembrane segment at 166–186 (FGLSFFLTLSAVMWFFYGLLL) threads the bilayer. Residues 187 to 190 (KDMN) are Extracellular-facing. A helical transmembrane segment spans residues 191–211 (IALPNVLGFIFGVLQMILFLI). The Cytoplasmic portion of the chain corresponds to 212–289 (YKKPGTKVLE…EKEVFLISKN (78 aa)).

This sequence belongs to the SWEET sugar transporter family. Forms heterooligomers with SWEET8.

The protein resides in the cell membrane. Functionally, mediates both low-affinity uptake and efflux of sugar across the plasma membrane. This is Bidirectional sugar transporter SWEET10 from Arabidopsis thaliana (Mouse-ear cress).